Here is a 479-residue protein sequence, read N- to C-terminus: V-type ATP synthase beta chain (479 aa).

The disordered stretch occupies residues 458-479; sequence EGDSEREAPKMDSPHEEISEKS.

This sequence belongs to the ATPase alpha/beta chains family.

Functionally, produces ATP from ADP in the presence of a proton gradient across the membrane. The V-type beta chain is a regulatory subunit. The protein is V-type ATP synthase beta chain of Nitrosococcus oceani (strain ATCC 19707 / BCRC 17464 / JCM 30415 / NCIMB 11848 / C-107).